Reading from the N-terminus, the 540-residue chain is Glucose-6-phosphate isomerase (540 aa).

Glu346 functions as the Proton donor in the catalytic mechanism. Residues His377 and Lys505 contribute to the active site.

The protein belongs to the GPI family.

The protein localises to the cytoplasm. The catalysed reaction is alpha-D-glucose 6-phosphate = beta-D-fructose 6-phosphate. It participates in carbohydrate biosynthesis; gluconeogenesis. Its pathway is carbohydrate degradation; glycolysis; D-glyceraldehyde 3-phosphate and glycerone phosphate from D-glucose: step 2/4. Catalyzes the reversible isomerization of glucose-6-phosphate to fructose-6-phosphate. The sequence is that of Glucose-6-phosphate isomerase from Francisella tularensis subsp. tularensis (strain SCHU S4 / Schu 4).